Consider the following 450-residue polypeptide: Phosphoglucosamine mutase (450 aa).

Residue Ser-101 is the Phosphoserine intermediate of the active site. Ser-101, Asp-240, Asp-242, and Asp-244 together coordinate Mg(2+). Position 101 is a phosphoserine (Ser-101).

Belongs to the phosphohexose mutase family. Requires Mg(2+) as cofactor. Activated by phosphorylation.

The enzyme catalyses alpha-D-glucosamine 1-phosphate = D-glucosamine 6-phosphate. Functionally, catalyzes the conversion of glucosamine-6-phosphate to glucosamine-1-phosphate. The sequence is that of Phosphoglucosamine mutase from Streptococcus thermophilus (strain ATCC BAA-250 / LMG 18311).